The chain runs to 31 residues: U2-theraphotoxin-Hhn1a (31 aa).

Intrachain disulfides connect Cys2–Cys14, Cys7–Cys19, and Cys13–Cys26.

As to expression, expressed by the venom gland.

The protein resides in the secreted. Agglutinates erythrocytes. This Cyriopagopus hainanus (Chinese bird spider) protein is U2-theraphotoxin-Hhn1a.